The sequence spans 744 residues: Tripartite motif-containing protein 2 (744 aa).

S10 bears the Phosphoserine mark. The RING-type zinc finger occupies 23–64; the sequence is CSICLERYKNPKVLPCLHTFCERCLQNYIPAHSLTLSCPVCR. The segment at 113–154 adopts a B box-type zinc-finger fold; it reads GKPLSCPNHDGNVMEFYCQSCETAMCRECTEGEHAEHPTVPL. Zn(2+) contacts are provided by C118, H121, C141, and H146. A Filamin repeat occupies 320 to 421; that stretch reads TTNAVASETV…IRGSPFKLKV (102 aa). T371 is subject to Phosphothreonine. Phosphoserine is present on residues S375, S424, and S428. The segment at 432 to 462 is disordered; the sequence is EGVKRRVKSPGSGHVKQKAVKRPASMYSTGK. NHL repeat units lie at residues 473-516, 520-563, 564-605, 609-652, 656-699, and 700-743; these read IFRV…FSND, KSRF…FSND, GKFK…FQPN, VTRF…FNQE, MLKF…FDGS, and GSFL…YRYL.

This sequence belongs to the TRIM/RBCC family. Forms homooligomers. Interacts with TRIM3; this interaction reduces TRIM2 activity. Interacts with myosin V; myosin V may not be a substrate for ubiquitination. Interacts with NEFL. Interacts with phosphorylated BCL2L11. Interacts with SIRPA. Post-translationally, RING-type zinc finger-dependent and UBE2D1-dependent autoubiquitination. Highly expressed in the cerebellum, hippocampus, retina and spinal cord. In the cerebellum, strongest expression in Purkinje cells and in the deep cerebellar nuclei. In retina, high expression in the ganglionic cell layer, inner nuclear layer and inthe outer plexiform layer. Particularly high expression in the hippocampus, in pyramidal cells of CA1-CA3 hippocampal areas and ingranule cells of the dentate gyrus.

The protein resides in the cytoplasm. The catalysed reaction is S-ubiquitinyl-[E2 ubiquitin-conjugating enzyme]-L-cysteine + [acceptor protein]-L-lysine = [E2 ubiquitin-conjugating enzyme]-L-cysteine + N(6)-ubiquitinyl-[acceptor protein]-L-lysine.. Its pathway is protein modification; protein ubiquitination. UBE2D1-dependent E3 ubiquitin-protein ligase that mediates the ubiquitination of NEFL and of phosphorylated BCL2L11. Plays a neuroprotective function. May play a role in neuronal rapid ischemic tolerance. Plays a role in antiviral immunity and limits new world arenavirus infection independently of its ubiquitin ligase activity by decreasing virus internalization. The sequence is that of Tripartite motif-containing protein 2 (Trim2) from Mus musculus (Mouse).